The primary structure comprises 769 residues: Elongation factor G, mitochondrial (769 aa).

The N-terminal 42 residues, 1-42 (MSKFLRGISSISSASLKARASNFGVFHGVCSARNLHQSRLCL), are a transit peptide targeting the mitochondrion. Residues 74–356 (TRLRNIGVSA…AVVDYLPQPN (283 aa)) form the tr-type G domain. Residues 83-90 (AHIDSGKT), 154-158 (DTPGH), and 208-211 (NKMD) contribute to the GTP site.

Belongs to the TRAFAC class translation factor GTPase superfamily. Classic translation factor GTPase family. EF-G/EF-2 subfamily.

It localises to the mitochondrion. Its pathway is protein biosynthesis; polypeptide chain elongation. Its function is as follows. Mitochondrial GTPase that catalyzes the GTP-dependent ribosomal translocation step during translation elongation. During this step, the ribosome changes from the pre-translocational (PRE) to the post-translocational (POST) state as the newly formed A-site-bound peptidyl-tRNA and P-site-bound deacylated tRNA move to the P and E sites, respectively. Catalyzes the coordinated movement of the two tRNA molecules, the mRNA and conformational changes in the ribosome. The sequence is that of Elongation factor G, mitochondrial from Debaryomyces hansenii (strain ATCC 36239 / CBS 767 / BCRC 21394 / JCM 1990 / NBRC 0083 / IGC 2968) (Yeast).